Here is a 476-residue protein sequence, read N- to C-terminus: E1B 55 kDa protein (476 aa).

Disordered regions lie at residues 1-20 (MERPNSSVAGLYSGLHGNGS) and 42-95 (FGSS…KMEN). 2 positions are modified to phosphoserine: S472 and S473.

This sequence belongs to the adenoviridae E1B 55 kDa protein family. Interacts with host PML-4 and PML-5; this interaction promotes efficient subnuclear targeting of E1B-55K to PML nuclear bodies. Interacts with E4-ORF3 protein. Interacts with E4-ORF6 protein.

Its subcellular location is the host nucleus. It localises to the host cytoplasm. In terms of biological role, plays a major role to prevent cellular inhibition of viral genome replication. Assembles an SCF-like E3 ubiquitin ligase complex based on the cellular proteins ELOB, ELOC, CUL5 and RBX1, in cooperation with viral E4orf6. This viral RING-type ligase ubiquitinates cellular substrates and targets them to proteasomal degradation: TP53/p53, LIG4, MRE11-RAD50-NBS1 (MRN) complex, ITGA3, DAXX and BLM. E1B-55K probably acts as the substrate-specific adapter of the SCF-like E3 ubiquitin ligase complex. Degradation of host TP53/p53 activity is essential for preventing E1A-induced TP53 accumulation that would otherwise lead to cell apoptosis and growth arrest. E1B-55K also inactivates TP53 transcription-factor activity by binding its transactivation domain. E1B-55K also functions as a SUMO1 E3 ligase for TP53 which causes the latter to be sequestered in promyelocytic leukemia (PML) nuclear bodies thereby contributing to maximal inhibition of TP53 function. This chain is E1B 55 kDa protein, found in Human adenovirus F serotype 40 (HAdV-40).